Here is a 194-residue protein sequence, read N- to C-terminus: uncharacterized protein (194 aa).

This sequence to A.aeolicus AQ_423.

This is an uncharacterized protein from Aquifex aeolicus (strain VF5).